A 145-amino-acid polypeptide reads, in one-letter code: Deoxyuridine 5'-triphosphate nucleotidohydrolase (145 aa).

Substrate contacts are provided by residues 62–64, Asn75, and 79–81; these read RSG and TVD.

The protein belongs to the dUTPase family. Mg(2+) is required as a cofactor.

The enzyme catalyses dUTP + H2O = dUMP + diphosphate + H(+). The protein operates within pyrimidine metabolism; dUMP biosynthesis; dUMP from dCTP (dUTP route): step 2/2. In terms of biological role, this enzyme is involved in nucleotide metabolism: it produces dUMP, the immediate precursor of thymidine nucleotides and it decreases the intracellular concentration of dUTP so that uracil cannot be incorporated into DNA. The polypeptide is Deoxyuridine 5'-triphosphate nucleotidohydrolase (Gloeothece citriformis (strain PCC 7424) (Cyanothece sp. (strain PCC 7424))).